Reading from the N-terminus, the 61-residue chain is Protein translocase subunit SecE (61 aa).

The chain crosses the membrane as a helical span at residues 39–59 (LGILVIGLVGMLIRIIGILML).

It belongs to the SecE/SEC61-gamma family. Component of the Sec protein translocase complex. Heterotrimer consisting of SecY (alpha), SecG (beta) and SecE (gamma) subunits. The heterotrimers can form oligomers, although 1 heterotrimer is thought to be able to translocate proteins. Interacts with the ribosome. May interact with SecDF, and other proteins may be involved.

It localises to the cell membrane. Its function is as follows. Essential subunit of the Sec protein translocation channel SecYEG. Clamps together the 2 halves of SecY. May contact the channel plug during translocation. This Pyrococcus horikoshii (strain ATCC 700860 / DSM 12428 / JCM 9974 / NBRC 100139 / OT-3) protein is Protein translocase subunit SecE.